Here is a 471-residue protein sequence, read N- to C-terminus: Serine/threonine-protein kinase AtPK2/AtPK19 (471 aa).

Residues 1 to 21 are disordered; that stretch reads MVSSQCSVANKNQTGKPFQKH. One can recognise a Protein kinase domain in the interval 140-395; sequence FEVLKVVGQG…AEEIKKHKWF (256 aa). Residues 146-154 and Lys169 contribute to the ATP site; that span reads VGQGAFGKV. Asp263 serves as the catalytic Proton acceptor. The segment at 281 to 307 is activation loop; the sequence is DFGLAKEFEENTRSNSMCGTTEYMAPE. Ser296 is modified (phosphoserine; by PDPK1). Residues 396-466 form the AGC-kinase C-terminal domain; sequence KAINWKKLEA…VRPPHSFLHR (71 aa). Thr455 bears the Phosphothreonine; by TOR mark.

This sequence belongs to the protein kinase superfamily. AGC Ser/Thr protein kinase family. S6 kinase subfamily. In terms of assembly, interacts with TAP46. Binds to MRF1. Post-translationally, undergoes serine-specific autophosphorylation. Phosphorylated at Thr-455 by TOR.

The enzyme catalyses L-seryl-[protein] + ATP = O-phospho-L-seryl-[protein] + ADP + H(+). It catalyses the reaction L-threonyl-[protein] + ATP = O-phospho-L-threonyl-[protein] + ADP + H(+). Its activity is regulated as follows. Activated by PDK1. Downstream effector of TOR signaling pathway. May be involved in adaptation of plant to cold or high-salt conditions. Mediates the phosphorylation of MRFs (e.g. MRF1). The sequence is that of Serine/threonine-protein kinase AtPK2/AtPK19 (ATPK2) from Arabidopsis thaliana (Mouse-ear cress).